Reading from the N-terminus, the 305-residue chain is 5'-hydroxyaverantin dehydrogenase stcG (305 aa).

Positions 25, 27, 48, 68, 186, 190, and 221 each coordinate NADP(+). Residue Tyr-186 is the Proton acceptor of the active site. Lys-190 (lowers pKa of active site Tyr) is an active-site residue.

This sequence belongs to the short-chain dehydrogenases/reductases (SDR) family.

The enzyme catalyses (1'S,5'S)-5'-hydroxyaverantin + NAD(+) = (S)-5'-oxoaverantin + NADH + H(+). It catalyses the reaction (1'S,5'R)-5'-hydroxyaverantin + NAD(+) = (S)-5'-oxoaverantin + NADH + 2 H(+). Its pathway is mycotoxin biosynthesis; sterigmatocystin biosynthesis. In terms of biological role, 5'-hydroxyaverantin dehydrogenase; part of the gene cluster that mediates the biosynthesis of sterigmatocystin (ST), a polyketide-derived furanocoumarin which is part of the most toxic and carcinogenic compounds among the known mycotoxins. The first step in the biosynthesis of sterigmatocystin is the production of hexanoate by the fatty acid synthase (FAS) units stcJ and stcK. The polyketide backbone is assembled by the non-reducing polyketide synthase stcA by condensation of the starter hexanoyl-CoA and 7 malonyl-CoA extender units followed by cyclization and release of norsolorinic acid. Norsolorinic acid is the first stable intermediate in the biosynthesis of sterigmatocystin and is converted into averantin (AVN) by the ketoreductase stcE which reduces the hexanoate ketone to an alcohol. Averantin is then oxidized into 5'-hydroxyaverantin (HAVN) by the cytochrome P450 monooxygenase stcF. 5'-hydroxyaverantin is further converted to 5'-oxyaverantin (OAVN) by the 5'-hydroxyaverantin dehydrogenase stcG. The next step is the conversion of OAVN into averufin (AVF) which is catalyzed by a yet to be identified enzyme. The cytochrome P450 monooxygenase stcB and the flavin-binding monooxygenase stcW are both required for the conversion of averufin to 1-hydroxyversicolorone. The esterase stcI probably catalyzes the formation of versiconal hemiacetal acetate from 1-hydroxyversicolorone. The oxydoreductase stcN then probably catalyzes the biosynthetic step from versiconal to versicolorin B (VERB). The next step is performed by the versicolorin B desaturase stcL to produce versicolorin A (VERA). The ketoreductase stcU and the cytochrome P450 monooxygenase stcS are involved in the conversion of versicolorin A to demethylsterigmatocystin. The Baeyer-Villiger oxidas stcQ and the reductase stcR might be involved in the biosynthetic step from versicolorin A to demethylsterigmatocystin. The final step in the biosynthesis of sterigmatocystin is the methylation of demethylsterigmatocystin catalyzed by the methyltransferase stcP. This Emericella nidulans (strain FGSC A4 / ATCC 38163 / CBS 112.46 / NRRL 194 / M139) (Aspergillus nidulans) protein is 5'-hydroxyaverantin dehydrogenase stcG.